Reading from the N-terminus, the 411-residue chain is Probable protein S-acyltransferase 2 (411 aa).

The next 2 helical transmembrane spans lie at 56-76 (LTTA…VFLI) and 85-105 (SLIL…LFLT). The DHHC domain occupies 160–210 (KFCDTCLLYRPPRASHCSICNNCVQRFDHHCPWVGQCIALRNYPYFICFIS). Cysteine 190 (S-palmitoyl cysteine intermediate) is an active-site residue. 2 helical membrane-spanning segments follow: residues 205 to 225 (FICF…FSWV) and 245 to 265 (FVVL…LTVF). Serine 405 is subject to Phosphoserine.

It belongs to the DHHC palmitoyltransferase family. As to expression, expressed in flowers and pollen.

Its subcellular location is the cytoplasmic vesicle membrane. The catalysed reaction is L-cysteinyl-[protein] + hexadecanoyl-CoA = S-hexadecanoyl-L-cysteinyl-[protein] + CoA. In terms of biological role, palmitoyl acyltransferase. In Arabidopsis thaliana (Mouse-ear cress), this protein is Probable protein S-acyltransferase 2 (PAT02).